Consider the following 338-residue polypeptide: tRNA N6-adenosine threonylcarbamoyltransferase (338 aa).

His-111 and His-115 together coordinate Fe cation. Residues 134-138 (LVSGG), Asp-167, Gly-180, and Asn-272 each bind substrate. Asp-300 contributes to the Fe cation binding site.

Belongs to the KAE1 / TsaD family. Fe(2+) is required as a cofactor.

The protein resides in the cytoplasm. It carries out the reaction L-threonylcarbamoyladenylate + adenosine(37) in tRNA = N(6)-L-threonylcarbamoyladenosine(37) in tRNA + AMP + H(+). Functionally, required for the formation of a threonylcarbamoyl group on adenosine at position 37 (t(6)A37) in tRNAs that read codons beginning with adenine. Is involved in the transfer of the threonylcarbamoyl moiety of threonylcarbamoyl-AMP (TC-AMP) to the N6 group of A37, together with TsaE and TsaB. TsaD likely plays a direct catalytic role in this reaction. The protein is tRNA N6-adenosine threonylcarbamoyltransferase of Vibrio atlanticus (strain LGP32) (Vibrio splendidus (strain Mel32)).